The following is a 388-amino-acid chain: Protein RecA (388 aa).

79–86 (GPESSGKT) is an ATP binding site. A disordered region spans residues 347-388 (IDGEEVSEQDTENKKDEPKKEEAVNEEVPLDLGDELEIEIEE). Positions 357-369 (TENKKDEPKKEEA) are enriched in basic and acidic residues. Residues 370–388 (VNEEVPLDLGDELEIEIEE) show a composition bias toward acidic residues.

The protein belongs to the RecA family.

The protein localises to the cytoplasm. Its function is as follows. Can catalyze the hydrolysis of ATP in the presence of single-stranded DNA, the ATP-dependent uptake of single-stranded DNA by duplex DNA, and the ATP-dependent hybridization of homologous single-stranded DNAs. It interacts with LexA causing its activation and leading to its autocatalytic cleavage. In Streptococcus pneumoniae (strain Hungary19A-6), this protein is Protein RecA.